Consider the following 480-residue polypeptide: Cysteine--tRNA ligase (480 aa).

Zn(2+) is bound at residue cysteine 29. The short motif at 31–41 is the 'HIGH' region element; sequence PTVYGHAHLGH. Positions 221, 246, and 250 each coordinate Zn(2+). Residues 278-282 carry the 'KMSKS' region motif; that stretch reads KMGKS. Lysine 281 is a binding site for ATP.

Belongs to the class-I aminoacyl-tRNA synthetase family. In terms of assembly, monomer. Requires Zn(2+) as cofactor.

Its subcellular location is the cytoplasm. It catalyses the reaction tRNA(Cys) + L-cysteine + ATP = L-cysteinyl-tRNA(Cys) + AMP + diphosphate. The polypeptide is Cysteine--tRNA ligase (Chlorobium chlorochromatii (strain CaD3)).